Reading from the N-terminus, the 397-residue chain is LIM/homeobox protein Lhx9 (397 aa).

2 consecutive LIM zinc-binding domains span residues 69–130 (ALCA…RFSV) and 131–193 (QRCA…LLQG). Disordered regions lie at residues 248-272 (ENEA…RMRT) and 330-364 (ENGG…TLTD). The homeobox DNA-binding region spans 267–326 (TKRMRTSFKHHQLRTMKSYFAINHNPDAKDLKQLAQKTGLTKRVLQVWFQNARAKFRRNL).

As to quaternary structure, interacts with LDB1 and LDB2.

It is found in the nucleus. Its function is as follows. Involved in gonadal development. The protein is LIM/homeobox protein Lhx9 (LHX9) of Bos taurus (Bovine).